The primary structure comprises 224 residues: CMRF35-like molecule 6 (224 aa).

An N-terminal signal peptide occupies residues 1 to 20 (MTARAWASWRSSALLLLLVP). At 21 to 183 (GYFPLSHPMT…HPGSLFSNVR (163 aa)) the chain is on the extracellular side. The Ig-like V-type domain maps to 22 to 130 (YFPLSHPMTV…HDPIVEVEVS (109 aa)). 2 cysteine pairs are disulfide-bonded: Cys-43/Cys-110 and Cys-57/Cys-65. Residues Asn-90 and Asn-99 are each glycosylated (N-linked (GlcNAc...) asparagine). Polar residues predominate over residues 136-151 (TTTASSPQSSMGTSGP). The disordered stretch occupies residues 136 to 174 (TTTASSPQSSMGTSGPPTKLPVHTWPSVTRKDSPEPSPH). The helical transmembrane segment at 184-204 (FLLLVLLELPLLLSMLGAVLW) threads the bilayer. Residues 205 to 224 (VNRPQRSSRSRQNWPKGENQ) are Cytoplasmic-facing.

The protein belongs to the CD300 family. As to expression, present on the surface of monocytes, neutrophils, a proportion of peripheral blood T- and B-lymphocytes and lymphocytic cell lines.

The protein localises to the cell membrane. The sequence is that of CMRF35-like molecule 6 (CD300C) from Homo sapiens (Human).